The chain runs to 289 residues: Nucleotide-binding protein FRAAL4592 (289 aa).

G13–S20 provides a ligand contact to ATP. D64 to G67 is a binding site for GTP.

The protein belongs to the RapZ-like family.

Functionally, displays ATPase and GTPase activities. The chain is Nucleotide-binding protein FRAAL4592 from Frankia alni (strain DSM 45986 / CECT 9034 / ACN14a).